The chain runs to 760 residues: RxLR effector protein PSR2 (760 aa).

Positions 1–21 (MGCRYAVLALAVAYFAGSIAA) are cleaved as a signal peptide. Positions 47 to 62 (RFLRAANTADERNEDR) match the RxLR-dEER motif. The stretch at 87–134 (PLLSWFEKKKSPDYVFLKLKINKGKQQLFDHPDWNVWVQYTTSVVKSD) is one WY1 repeat. The segment at 87–760 (PLLSWFEKKK…TTKYMERYGQ (674 aa)) is 7 X 93 AA tandem repeats. One copy of the LWY2 repeat lies at 135–221 (PEEAMIAALR…MKLYNSKPVN (87 aa)). An LWY3 repeat occupies 222 to 312 (KKQQVTLVSM…KYVDNYNRDF (91 aa)). The stretch at 313 to 403 (PDEATTVMAT…KYVEDLNLKP (91 aa)) is one LWY4 repeat. The LWY5 repeat unit spans residues 404-496 (EHNDLQVSII…KFLEHYYKSF (93 aa)). An LWY6 repeat occupies 497 to 584 (PTPMMSALAK…RYLDEFNKKF (88 aa)). The stretch at 585 to 760 (PDEKVSMTDT…TTKYMERYGQ (176 aa)) is one LWY7 repeat.

It belongs to the RxLR effector family. Interacts with host dsRNA-binding protein DRB4.

The protein resides in the secreted. It is found in the host cell. Secreted effector that possesses RNA silencing suppression activity by inhibiting the biogenesis of small RNAs in the host plant to promote enhanced susceptibility of host to the pathogen during infection. Interferes with secondary siRNA production by associating with host dsRNA-binding protein DRB4. Inhibits the host salicylic acid pathway during infection. In Phytophthora infestans (strain T30-4) (Potato late blight agent), this protein is RxLR effector protein PSR2.